A 711-amino-acid chain; its full sequence is DNA ligase (711 aa).

NAD(+) contacts are provided by residues 39 to 43 (DAEYD), 88 to 89 (SL), and glutamate 119. The active-site N6-AMP-lysine intermediate is the lysine 121. Residues arginine 142, glutamate 179, lysine 295, and lysine 319 each coordinate NAD(+). Residues cysteine 416, cysteine 419, cysteine 434, and cysteine 440 each contribute to the Zn(2+) site. The BRCT domain occupies 630–711 (ESVSSLAGRA…LRELLAGAGA (82 aa)).

It belongs to the NAD-dependent DNA ligase family. LigA subfamily. Mg(2+) serves as cofactor. Mn(2+) is required as a cofactor.

The catalysed reaction is NAD(+) + (deoxyribonucleotide)n-3'-hydroxyl + 5'-phospho-(deoxyribonucleotide)m = (deoxyribonucleotide)n+m + AMP + beta-nicotinamide D-nucleotide.. DNA ligase that catalyzes the formation of phosphodiester linkages between 5'-phosphoryl and 3'-hydroxyl groups in double-stranded DNA using NAD as a coenzyme and as the energy source for the reaction. It is essential for DNA replication and repair of damaged DNA. The sequence is that of DNA ligase from Halorhodospira halophila (strain DSM 244 / SL1) (Ectothiorhodospira halophila (strain DSM 244 / SL1)).